Reading from the N-terminus, the 205-residue chain is Holliday junction branch migration complex subunit RuvA (205 aa).

A domain I region spans residues 1-67; the sequence is MIGWLKGDVQ…ADNLQLFGFL (67 aa). The tract at residues 68–146 is domain II; sequence QLAERDLFRE…DSVASTGPER (79 aa). The interval 147-155 is flexible linker; that stretch reads NQLDPVAPD. Positions 155 to 205 are domain III; sequence DLIATLETLGFETHEIRDALQRLNGMGGPQDGDDDDAWLRACIKLMSSTDP.

This sequence belongs to the RuvA family. As to quaternary structure, homotetramer. Forms an RuvA(8)-RuvB(12)-Holliday junction (HJ) complex. HJ DNA is sandwiched between 2 RuvA tetramers; dsDNA enters through RuvA and exits via RuvB. An RuvB hexamer assembles on each DNA strand where it exits the tetramer. Each RuvB hexamer is contacted by two RuvA subunits (via domain III) on 2 adjacent RuvB subunits; this complex drives branch migration. In the full resolvosome a probable DNA-RuvA(4)-RuvB(12)-RuvC(2) complex forms which resolves the HJ.

The protein resides in the cytoplasm. In terms of biological role, the RuvA-RuvB-RuvC complex processes Holliday junction (HJ) DNA during genetic recombination and DNA repair, while the RuvA-RuvB complex plays an important role in the rescue of blocked DNA replication forks via replication fork reversal (RFR). RuvA specifically binds to HJ cruciform DNA, conferring on it an open structure. The RuvB hexamer acts as an ATP-dependent pump, pulling dsDNA into and through the RuvAB complex. HJ branch migration allows RuvC to scan DNA until it finds its consensus sequence, where it cleaves and resolves the cruciform DNA. The chain is Holliday junction branch migration complex subunit RuvA from Parasynechococcus marenigrum (strain WH8102).